Reading from the N-terminus, the 463-residue chain is MGAKTFEGGDNHEDATNALSTKSNAVGGKPRGANMLEDGDGEFGTDDDDDGDGQDSSLAVVNPEDGSKPKKRKRSKKKKSNKKKPGDGAQQQTSPPRVPLSQLFPDGKYPVGQMVKVPAVNLRRTTDEELRYLSRGTITNDEALSDYRKAAEVHRQVRHWVHETVHPGQSLTELAVGIEDGVRALLGHQGLEPGDSLKGGMGFPTGLALNNCAAHYTPNPGQKDIILKKEDVMKVDFGVHVNGWIVDSAFTVTFDPVYDNLLAAVKDATNTGLKCAGVDARVGEIGGYIQEAMESYEVEINGKVHPVKAIRNITGHDILPYRIHGGKQVPFIKSKDQTKMEEGEVFAIETFGTTGKGYMMDGPGVYGYSKDPDARNMHLPLASARALLKTINQNFGTIPFCRRYLDRLGLEKYLLGMNSLISHGIVHMYPPLVDIPGSYTAQFEHTILIKSSGNEIISRGDDY.

The tract at residues 1–107 is disordered; sequence MGAKTFEGGD…VPLSQLFPDG (107 aa). Acidic residues predominate over residues 37 to 53; that stretch reads EDGDGEFGTDDDDDGDG. The span at 69 to 83 shows a compositional bias: basic residues; it reads PKKRKRSKKKKSNKK. Histidine 215 contributes to the substrate binding site. Positions 236, 247, and 316 each coordinate a divalent metal cation. Position 324 (histidine 324) interacts with substrate. A divalent metal cation is bound by residues glutamate 349 and glutamate 444.

It belongs to the peptidase M24A family. Methionine aminopeptidase eukaryotic type 2 subfamily. Requires Co(2+) as cofactor. The cofactor is Zn(2+). It depends on Mn(2+) as a cofactor. Fe(2+) serves as cofactor.

The protein resides in the cytoplasm. It catalyses the reaction Release of N-terminal amino acids, preferentially methionine, from peptides and arylamides.. Its function is as follows. Cotranslationally removes the N-terminal methionine from nascent proteins. The N-terminal methionine is often cleaved when the second residue in the primary sequence is small and uncharged (Met-Ala-, Cys, Gly, Pro, Ser, Thr, or Val). The polypeptide is Methionine aminopeptidase 2-2 (Talaromyces marneffei (strain ATCC 18224 / CBS 334.59 / QM 7333) (Penicillium marneffei)).